The chain runs to 319 residues: Ninja-family protein Os07g0602900 (319 aa).

Disordered regions lie at residues Met-1 to Gly-26, Leu-69 to Tyr-152, and Ala-181 to Arg-234. The span at Pro-70–Gly-79 shows a compositional bias: gly residues. Positions Glu-105–Leu-118 are enriched in basic and acidic residues. Residues Asp-185–Asn-196 show a composition bias toward polar residues. The segment covering Leu-225 to Arg-234 has biased composition (low complexity).

The protein belongs to the Ninja family.

The protein localises to the nucleus. This Oryza sativa subsp. japonica (Rice) protein is Ninja-family protein Os07g0602900.